A 66-amino-acid chain; its full sequence is Jindongenin-1a (66 aa).

Residues 1 to 22 (MFTLKKPLLLLFFLGTVSLSLC) form the signal peptide. A propeptide spanning residues 23 to 40 (EQERAADDDEGEVIEEEV) is cleaved from the precursor. A disulfide bridge links Cys60 with Cys66.

As to expression, expressed by the skin glands.

It localises to the secreted. Displays broad-spectrum antibacterial activity against a range of Gram-positive and Gram-negative bacteria. Also displays antifungal activity against C.albicans ATCC 2002. Has low hemolytic activity, low cytotoxicity and low antioxidant activity. This is Jindongenin-1a from Amolops jingdongensis (Chinese torrent frog).